Consider the following 272-residue polypeptide: Shikimate dehydrogenase (NADP(+)) (272 aa).

Residues 14 to 16 and threonine 61 each bind shikimate; that span reads SKS. The Proton acceptor role is filled by lysine 65. Glutamate 77 contacts NADP(+). Residues asparagine 86 and aspartate 102 each contribute to the shikimate site. NADP(+) contacts are provided by residues 126–130, 149–154, and methionine 213; these read GAGGA and NRTVSR. Tyrosine 215 is a shikimate binding site. Residue glycine 237 coordinates NADP(+).

Belongs to the shikimate dehydrogenase family. Homodimer.

The catalysed reaction is shikimate + NADP(+) = 3-dehydroshikimate + NADPH + H(+). It functions in the pathway metabolic intermediate biosynthesis; chorismate biosynthesis; chorismate from D-erythrose 4-phosphate and phosphoenolpyruvate: step 4/7. Involved in the biosynthesis of the chorismate, which leads to the biosynthesis of aromatic amino acids. Catalyzes the reversible NADPH linked reduction of 3-dehydroshikimate (DHSA) to yield shikimate (SA). This Escherichia coli O7:K1 (strain IAI39 / ExPEC) protein is Shikimate dehydrogenase (NADP(+)).